We begin with the raw amino-acid sequence, 500 residues long: ATP synthase subunit alpha (500 aa).

169–176 lines the ATP pocket; the sequence is GDRQTGKT.

The protein belongs to the ATPase alpha/beta chains family. In terms of assembly, F-type ATPases have 2 components, CF(1) - the catalytic core - and CF(0) - the membrane proton channel. CF(1) has five subunits: alpha(3), beta(3), gamma(1), delta(1), epsilon(1). CF(0) has three main subunits: a(1), b(2) and c(9-12). The alpha and beta chains form an alternating ring which encloses part of the gamma chain. CF(1) is attached to CF(0) by a central stalk formed by the gamma and epsilon chains, while a peripheral stalk is formed by the delta and b chains.

Its subcellular location is the cell membrane. The enzyme catalyses ATP + H2O + 4 H(+)(in) = ADP + phosphate + 5 H(+)(out). In terms of biological role, produces ATP from ADP in the presence of a proton gradient across the membrane. The alpha chain is a regulatory subunit. The protein is ATP synthase subunit alpha of Lactococcus lactis subsp. cremoris (strain SK11).